The sequence spans 180 residues: Zinc finger protein 740 (180 aa).

The segment covering 1–11 (MMLSQIASKQA) has biased composition (polar residues). The disordered stretch occupies residues 1-62 (MMLSQIASKQ…KEDDSLAEAS (62 aa)). Lysine 9 participates in a covalent cross-link: Glycyl lysine isopeptide (Lys-Gly) (interchain with G-Cter in SUMO2). Serine 19 carries the phosphoserine modification. Basic and acidic residues predominate over residues 31-56 (CKPRFDLSSKGHRKDSDKSRNRKEDD). 2 consecutive C2H2-type zinc fingers follow at residues 88–110 (FICEHCFGAFRSSYHLKRHVLIH) and 116–138 (FECDVCDMRFIQKYHLERHKRVH). The segment at 144–166 (YQCERCHQCFSRTDRLLRHKRMC) adopts a C2H2-type 3; atypical zinc-finger fold.

Belongs to the krueppel C2H2-type zinc-finger protein family.

It localises to the nucleus. In terms of biological role, may be involved in transcriptional regulation. This Mus musculus (Mouse) protein is Zinc finger protein 740 (Znf740).